Reading from the N-terminus, the 357-residue chain is MSRTSTSRYWSAVVGALTPYVPGEQPKLANLVKLNTNENPYGPSPRVLEALRGEVGDTLRLYPDPNSDRLRAAIAAYHAVSPDQVFVGNGSDEVLAHTFLALLKHERPVFFPDITYSFYPVYCGLYGIAHRAIPLDDAFEIRVDDYLAPKGGVIFPNPNAPTGRLLALGEIERLLAANRDSVVVIDEAYVDFGGDSAVPLVARHPQLLVTRTLSKSHALAGLRVGYAVGQAPLIEALNRVKDSFNSYPLDRFAQAGALASIEDRAYFESICARVIATRTRLVDAMESLGFEVLPSAANFIFARHPAHDGEALAARLRERSIIVRHFKNPARIAPFLRITVGTDAQCDALVDALKALC.

Lys-215 carries the post-translational modification N6-(pyridoxal phosphate)lysine.

The protein belongs to the class-II pyridoxal-phosphate-dependent aminotransferase family. Histidinol-phosphate aminotransferase subfamily. Homodimer. It depends on pyridoxal 5'-phosphate as a cofactor.

It carries out the reaction L-histidinol phosphate + 2-oxoglutarate = 3-(imidazol-4-yl)-2-oxopropyl phosphate + L-glutamate. It participates in amino-acid biosynthesis; L-histidine biosynthesis; L-histidine from 5-phospho-alpha-D-ribose 1-diphosphate: step 7/9. The sequence is that of Histidinol-phosphate aminotransferase 2 from Thiobacillus denitrificans (strain ATCC 25259 / T1).